A 301-amino-acid chain; its full sequence is MSEDIRRGPGRPPKKRVVPNFERKGILEKPVRPQSRLEFSYDNPLIFKNLFIYFKNLKSKNILVRCTPTEITFFSRDQSQASFVIATIDGKNVNHYYASDVFWLGINRELVEKMFNSIDRSFLKITIVHRYDKPETLFFIFTDFDIDKECTYQITVSEPELDMDLIEMEKSISEERLKNYPLRWEFTSKQLKKTFSDLSNYTELVTIEKLGGDTPLHLYFQKFNSISYHEMYKSSNKINLTSTIPKSQVFQINVKIAHIKSLASAMVTDKIRILCEENGNLIFQSEMDALMLNTITLNNMI.

It belongs to the asfivirus E301R family. As to quaternary structure, interacts with host IRF3.

In terms of biological role, plays a role in the inhibition of host innate immune system by acting as a negatively regulator of type I interferon production. Mechanistically, interacts with and prevents host IRF3 nuclear localization to inhibit its transcriptional activity. This is an uncharacterized protein from African swine fever virus (isolate Warthog/Namibia/Wart80/1980) (ASFV).